A 609-amino-acid polypeptide reads, in one-letter code: UvrABC system protein C (609 aa).

The 79-residue stretch at 16-94 (SSPGVYRMYD…IKQYMPKYNV (79 aa)) folds into the GIY-YIG domain. The UVR domain maps to 203-238 (HQVMSVLVGKMEQAASDMRYEQAALYRDQITALRRV).

Belongs to the UvrC family. Interacts with UvrB in an incision complex.

It localises to the cytoplasm. In terms of biological role, the UvrABC repair system catalyzes the recognition and processing of DNA lesions. UvrC both incises the 5' and 3' sides of the lesion. The N-terminal half is responsible for the 3' incision and the C-terminal half is responsible for the 5' incision. In Shewanella halifaxensis (strain HAW-EB4), this protein is UvrABC system protein C.